We begin with the raw amino-acid sequence, 1115 residues long: Neural cell adhesion molecule 1 (1115 aa).

The N-terminal stretch at 1-19 (MLRTKDLIWTLFFLGTAVS) is a signal peptide. 5 consecutive Ig-like C2-type domains span residues 20 to 111 (LQVD…ATVN), 116 to 205 (QKLM…KDIQ), 212 to 302 (PTVQ…ASIH), 309 to 402 (PKIT…MYLE), and 407 to 492 (PKLQ…ESLE). Over 20-711 (LQVDIVPSQG…NGSPTAGLST (692 aa)) the chain is Extracellular. Disulfide bonds link Cys-41–Cys-96 and Cys-139–Cys-189. Heparin contacts are provided by residues 152 to 156 (KHKGR) and 161 to 165 (KKDVR). Asn-222 carries an N-linked (GlcNAc...) asparagine; partial glycan. The cysteines at positions 235 and 288 are disulfide-linked. Asn-316, Asn-348, Asn-424, Asn-450, and Asn-479 each carry an N-linked (GlcNAc...) asparagine glycan. A disulfide bond links Cys-330 and Cys-386. Cys-427 and Cys-480 form a disulfide bridge. Fibronectin type-III domains are found at residues 500-599 (TPSS…TQPV) and 601-696 (EPSA…SAQP). A lipid anchor (GPI-anchor amidated serine) is attached at Thr-706. A helical membrane pass occupies residues 712–729 (GAIVGILIVIFVLLLVVM). Over 730–1115 (DITCYFLNKC…TQTKENESKA (386 aa)) the chain is Cytoplasmic. Disordered regions lie at residues 756–809 (GAKG…TEPE), 839–912 (FATA…SASN), and 924–1115 (VLSP…ESKA). Residues 758–799 (KGKDMEEGKAAFSKDESKEPIVEVRTEEERTPNHDGGKHTEP) are compositionally biased toward basic and acidic residues. Residues Ser-770 and Ser-774 each carry the phosphoserine modification. Low complexity-rich tracts occupy residues 800 to 809 (NETTPLTEPE), 845 to 856 (SPTSETTTLTSS), and 876 to 896 (TPSKGVTASSSSPASAPKVAP). 2 positions are modified to phosphoserine: Ser-887 and Ser-890. 2 stretches are compositionally biased toward polar residues: residues 902-912 (DTPTSAPSASN) and 926-935 (SPSTPASAGE). Ser-926 carries the post-translational modification Phosphoserine. Phosphothreonine is present on Thr-929. Low complexity-rich tracts occupy residues 936–974 (TSKAPPASKASPAPTPTPAGAASPLAAVAAPATDAPQAK) and 999–1012 (AATAPASPKSKAAT). Residues Ser-946 and Ser-958 each carry the phosphoserine modification. Thr-1001 carries the post-translational modification Phosphothreonine. Ser-1005 is subject to Phosphoserine. Basic and acidic residues-rich tracts occupy residues 1019–1037 (EDLKMDEGNFKTPDIDLAK) and 1074–1091 (KTEKGPVETKSEPPESEA). A Phosphothreonine modification is found at Thr-1030.

In terms of assembly, interacts with MDK. Found in a complex with SLC39A6, SLC39A10 and with NCAM1; this complex controls NCAM1 phosphorylation and integration into focal adhesion complexes during epithelial-tomesenchymal transition. Interacts with synaptic plasticity regulator PANTS. Polysialylated by ST8SIA2 and ST8SIA4. Polysialylation modulates cell interactions by confering both attractive and repulsive properties that are highly regulated by ST8SIA2 and ST8SIA4. Polysialylation is formed on a-2,3-linked sialic acid of core glycans.

It localises to the cell membrane. This protein is a cell adhesion molecule involved in neuron-neuron adhesion, neurite fasciculation, outgrowth of neurites, etc. The chain is Neural cell adhesion molecule 1 from Mus musculus (Mouse).